The primary structure comprises 468 residues: 3-isopropylmalate dehydratase large subunit (468 aa).

The [4Fe-4S] cluster site is built by Cys347, Cys407, and Cys410.

This sequence belongs to the aconitase/IPM isomerase family. LeuC type 1 subfamily. As to quaternary structure, heterodimer of LeuC and LeuD. The cofactor is [4Fe-4S] cluster.

The catalysed reaction is (2R,3S)-3-isopropylmalate = (2S)-2-isopropylmalate. It functions in the pathway amino-acid biosynthesis; L-leucine biosynthesis; L-leucine from 3-methyl-2-oxobutanoate: step 2/4. Functionally, catalyzes the isomerization between 2-isopropylmalate and 3-isopropylmalate, via the formation of 2-isopropylmaleate. The sequence is that of 3-isopropylmalate dehydratase large subunit from Campylobacter jejuni subsp. jejuni serotype O:23/36 (strain 81-176).